The chain runs to 132 residues: Small ribosomal subunit protein uS8 (132 aa).

The protein belongs to the universal ribosomal protein uS8 family. Part of the 30S ribosomal subunit. Contacts proteins S5 and S12.

Its function is as follows. One of the primary rRNA binding proteins, it binds directly to 16S rRNA central domain where it helps coordinate assembly of the platform of the 30S subunit. This chain is Small ribosomal subunit protein uS8, found in Streptococcus uberis (strain ATCC BAA-854 / 0140J).